A 290-amino-acid polypeptide reads, in one-letter code: uncharacterized protein (290 aa).

Residues 153-178 are disordered; it reads EMVPITTSSTTPRSKGDEATSTGAFP. Residues 157 to 178 are compositionally biased toward polar residues; it reads ITTSSTTPRSKGDEATSTGAFP. The helical transmembrane segment at 202 to 222 threads the bilayer; sequence LIAVTLLLGGAAIIVFVIFEV. Residues 246 to 276 are disordered; it reads KEEDQKPGTTESQLDSQPEKVKHNVPNSSDS. Residues 252-261 show a composition bias toward polar residues; the sequence is PGTTESQLDS.

The protein localises to the membrane. This is an uncharacterized protein from Mus musculus (Mouse).